The following is a 164-amino-acid chain: Anthrone oxygenase AgnL2 (164 aa).

3 consecutive transmembrane segments (helical) span residues 11-31 (VVTG…AVPV), 48-70 (RMYH…LYAY), and 85-105 (VFAL…LCMV).

This sequence belongs to the anthrone oxygenase family.

Its subcellular location is the membrane. The catalysed reaction is emodin anthrone + O2 = emodin + H2O + H(+). It participates in secondary metabolite biosynthesis. In terms of biological role, anthrone oxygenase; part of the gene cluster that mediates the biosynthesis of agnestins, dihydroxy-xanthone metabolites. The pathway begins with the assembly and cyclization of atrochrysone thioester by the non-reducing polyketide synthase Agnpks1. The atrochrysone carboxyl ACP thioesterase AgnL7 then breaks the thioester bond and releases the atrochrysone carboxylic acid as the first enzyme-free intermediate. The decarboxylase AgnL1 then catalyzes the concerted decarboxylation-elimination required to convert atochrysone carboxylic acid into emodin anthrone, which is further oxidized to emodin by the anthrone oxygenase AgnL2. Emodin then undergoes reduction catalyzed by the oxidoreductase AgnL4 to yield the dihydroquinone tautomer which is the substrate for reduction by the short chain dehydrogenase AgnL6 reduction to produce hydroxyketone, followed by AgnL8 dehydration and likely spontaneous autoxidation to chrysophanol. Baeyer-Villiger oxidation by the oxidase AgnL3 leads to monodictyphenone via cleavage of the C-10/C-10a bond of chrysophanol. Alternative cleavage at the C-4a/C-10 bond of chrysophanol also leads to the formation some cephalone F. Further conversion to agnestins A and B, requires reduction to dihydro-monodictyphenone, oxidation to agnestin C probably via an epoxide, and rearrangement to either agnestin A or agnestin B directly, although agnestin A or agnestin B can also interconvert. Within the cluster, AgnR1 is the only unassigned oxidoreductase present which could be involved in this conversion. However, AgnR1 seems not to be involved in this step, and thus genes involved in the proposed oxidation/reduction may be located elsewhere on the genome. Further agnestin A derivatives are probably formed by spontaneous decarboxylations, dehydrations and methanolysis reactions. The protein is Anthrone oxygenase AgnL2 of Paecilomyces divaricatus (Penicillium divaricatum).